We begin with the raw amino-acid sequence, 271 residues long: Regulatory protein RecX (271 aa).

This sequence belongs to the RecX family.

Its subcellular location is the cytoplasm. Its function is as follows. Modulates RecA activity. This is Regulatory protein RecX from Geobacillus sp. (strain WCH70).